The primary structure comprises 510 residues: ATP synthase subunit alpha (510 aa).

169–176 (GDRQTGKT) is an ATP binding site.

This sequence belongs to the ATPase alpha/beta chains family. In terms of assembly, F-type ATPases have 2 components, CF(1) - the catalytic core - and CF(0) - the membrane proton channel. CF(1) has five subunits: alpha(3), beta(3), gamma(1), delta(1), epsilon(1). CF(0) has four main subunits: a(1), b(1), b'(1) and c(9-12).

The protein resides in the cell inner membrane. The catalysed reaction is ATP + H2O + 4 H(+)(in) = ADP + phosphate + 5 H(+)(out). Functionally, produces ATP from ADP in the presence of a proton gradient across the membrane. The alpha chain is a regulatory subunit. The protein is ATP synthase subunit alpha of Rhodopseudomonas palustris (strain ATCC BAA-98 / CGA009).